Consider the following 411-residue polypeptide: Argininosuccinate synthase (411 aa).

Residues 10-18 (AYSGGLDTS) and A37 each bind ATP. Residues Y89 and S94 each coordinate L-citrulline. G119 is an ATP binding site. 3 residues coordinate L-aspartate: T121, N125, and D126. Position 125 (N125) interacts with L-citrulline. L-citrulline contacts are provided by R129, S178, S187, E263, and Y275.

The protein belongs to the argininosuccinate synthase family. Type 1 subfamily. In terms of assembly, homotetramer.

It localises to the cytoplasm. It catalyses the reaction L-citrulline + L-aspartate + ATP = 2-(N(omega)-L-arginino)succinate + AMP + diphosphate + H(+). Its pathway is amino-acid biosynthesis; L-arginine biosynthesis; L-arginine from L-ornithine and carbamoyl phosphate: step 2/3. The sequence is that of Argininosuccinate synthase from Aeromonas hydrophila subsp. hydrophila (strain ATCC 7966 / DSM 30187 / BCRC 13018 / CCUG 14551 / JCM 1027 / KCTC 2358 / NCIMB 9240 / NCTC 8049).